The primary structure comprises 504 residues: Protein anon-37Cs (504 aa).

Low levels seen in adult heads, thorax, abdomen and ovaries, high levels in testes.

The protein localises to the cytoplasm. Its function is as follows. Has a non-vital function. This is Protein anon-37Cs (anon-37Cs) from Drosophila melanogaster (Fruit fly).